A 161-amino-acid chain; its full sequence is Large ribosomal subunit protein mL50 (161 aa).

The interval 27–51 (WGGHSKKEEKEVEENSIIPQEKKEP) is disordered.

Belongs to the mitochondrion-specific ribosomal protein mL50 family. Component of the mitochondrial ribosome large subunit (39S) which comprises a 16S rRNA and about 50 distinct proteins.

The protein resides in the mitochondrion. In Gallus gallus (Chicken), this protein is Large ribosomal subunit protein mL50 (MRPL50).